Consider the following 126-residue polypeptide: Large ribosomal subunit protein bL17 (126 aa).

Belongs to the bacterial ribosomal protein bL17 family. Part of the 50S ribosomal subunit. Contacts protein L32.

This chain is Large ribosomal subunit protein bL17, found in Xylella fastidiosa (strain M12).